The following is a 71-amino-acid chain: Small ribosomal subunit protein eS31 (71 aa).

Zn(2+)-binding residues include Cys35, Cys38, Cys53, and Cys56. The C4-type zinc finger occupies 35–56 (CPKCGAGVFMAEHLNRYACGKC).

The protein belongs to the eukaryotic ribosomal protein eS31 family. As to quaternary structure, part of the 30S ribosomal subunit. The cofactor is Zn(2+).

This chain is Small ribosomal subunit protein eS31, found in Methanococcus vannielii (strain ATCC 35089 / DSM 1224 / JCM 13029 / OCM 148 / SB).